We begin with the raw amino-acid sequence, 432 residues long: MQVSVETTQGLGRRVTITIAADSIETAVKSELVNVAKKVRIDGFRKGKVPMNIVAQRYGASVRQDVLGDLMSRNFIDAIIKEKINPAGAPTYVPGEYKLGEDFTYSVEFEVYPEVELQGLEAIEVEKPIVEVTDADVDGMLDTLRKQQATWKEKDGAVEAEDRVTIDFTGSVDSEEFEGGKASDFVLAMGQGRMIPGFEDGIKGHKAGEEFTIDVTFPEEYHAENLKGKAAKFAINLKKVEERELPELTAEFIKRFGVEDGSVEGLRAEVRKNMERELKSAIRNRVKSQAIEGLVKANDIDVPAALIDSEIDVLRRQAAQRFGGNEKQALELPRELFEEQAKRRVVVGLLLGEVIRTNELKADEERVKGLIEEMASAYEDPKEVIEFYSKNKELMDNMRNVALEEQAVEAVLAKAKVTEKETTFNELMNQQA.

The PPIase FKBP-type domain occupies 161-246; it reads EDRVTIDFTG…LKKVEERELP (86 aa).

The protein belongs to the FKBP-type PPIase family. Tig subfamily. As to quaternary structure, homodimer and monomer. In vivo most of the ribosomes are in complex with monomeric TF. Uncomplexed TF, however, is in a monomer-dimer equilibrium with approximately two thirds of TF existing in a dimeric state.

The protein localises to the cytoplasm. The enzyme catalyses [protein]-peptidylproline (omega=180) = [protein]-peptidylproline (omega=0). In terms of biological role, involved in protein export. Acts as a chaperone by maintaining the newly synthesized protein in an open conformation. Functions as a peptidyl-prolyl cis-trans isomerase. In Shigella boydii serotype 18 (strain CDC 3083-94 / BS512), this protein is Trigger factor.